We begin with the raw amino-acid sequence, 117 residues long: Large ribosomal subunit protein bL19 (117 aa).

This sequence belongs to the bacterial ribosomal protein bL19 family.

Functionally, this protein is located at the 30S-50S ribosomal subunit interface and may play a role in the structure and function of the aminoacyl-tRNA binding site. This chain is Large ribosomal subunit protein bL19, found in Blochmanniella floridana.